The primary structure comprises 291 residues: MAALKDIKRKVAAVEKTKQITRAMNMVAASKFRTSQTRMESFRPYAMKFMEVLSSLAVRVSPDAHPLLAAREAKRIRVVSMSSDRGLCGGFNSSLIKSTERFVREKIAEGLEVDLTPIGRKVREYFKRKYALVSDRADVMSKFDMTLAVEIAEDVIDPFVNEEYDELYLIYNEFINVSMQRPAVVRLLPLPSVGQDAEIEAEKRIDYNYEPSDEELIGKLLPMYIHVLIFRALLETSAGENGARMAAMDNATRNCDEMISTLTLQYNKVRQSAITAELMDIVGGTEALAKG.

Belongs to the ATPase gamma chain family. F-type ATPases have 2 components, CF(1) - the catalytic core - and CF(0) - the membrane proton channel. CF(1) has five subunits: alpha(3), beta(3), gamma(1), delta(1), epsilon(1). CF(0) has three main subunits: a, b and c.

Its subcellular location is the cell inner membrane. In terms of biological role, produces ATP from ADP in the presence of a proton gradient across the membrane. The gamma chain is believed to be important in regulating ATPase activity and the flow of protons through the CF(0) complex. The chain is ATP synthase gamma chain from Syntrophus aciditrophicus (strain SB).